A 1037-amino-acid chain; its full sequence is Probable serine/threonine-protein kinase KCC4 (1037 aa).

In terms of domain architecture, Protein kinase spans 21–285; that stretch reads WKLGETLGFG…IRDILSHPLL (265 aa). ATP contacts are provided by residues 27 to 35 and K50; that span reads LGFGSTGKV. D152 serves as the catalytic Proton acceptor. Basic residues predominate over residues 372 to 387; sequence NKKNRNKIKKTKKNKR. Residues 372-494 form a disordered region; the sequence is NKKNRNKIKK…MPNTKRSSLT (123 aa). Residues 388 to 404 are compositionally biased toward low complexity; sequence SSTLSSSSSLLLNNRSI. S396 carries the post-translational modification Phosphoserine. The span at 408-427 shows a compositional bias: basic residues; the sequence is PRRRTSKRHSREFSSSRKRS. Residues 453–465 are compositionally biased toward polar residues; the sequence is NVASANTQATPSG. Residues 469-480 are compositionally biased toward basic residues; sequence PHKRNSKKRSSK. Positions 481 to 494 are enriched in low complexity; sequence RLSYMPNTKRSSLT. Phosphoserine is present on residues S675, S707, S777, S822, S825, and S871. Disordered stretches follow at residues 746–804, 810–829, and 861–918; these read LIKE…DFPQ, QEYD…KSAE, and TLPS…TVKK. Polar residues predominate over residues 861–873; that stretch reads TLPSLTSNNSSVG. Over residues 879 to 888 the composition is skewed to basic and acidic residues; that stretch reads GAEKGTESEK.

It belongs to the protein kinase superfamily. CAMK Ser/Thr protein kinase family. NIM1 subfamily. As to quaternary structure, interacts with septin proteins, primarily with CDC11. Interacts with SWE1 and NAP1.

The protein resides in the bud neck. It carries out the reaction L-seryl-[protein] + ATP = O-phospho-L-seryl-[protein] + ADP + H(+). The enzyme catalyses L-threonyl-[protein] + ATP = O-phospho-L-threonyl-[protein] + ADP + H(+). Its function is as follows. Involved in regulation of bud growth during cell cycle and in septin organization. Plays a role in cell wall synthesis. This is Probable serine/threonine-protein kinase KCC4 (KCC4) from Saccharomyces cerevisiae (strain ATCC 204508 / S288c) (Baker's yeast).